A 430-amino-acid polypeptide reads, in one-letter code: Enolase (430 aa).

Gln163 is a (2R)-2-phosphoglycerate binding site. Glu205 serves as the catalytic Proton donor. Mg(2+)-binding residues include Asp242, Glu286, and Asp313. Lys338, Arg367, Ser368, and Lys389 together coordinate (2R)-2-phosphoglycerate. The active-site Proton acceptor is the Lys338.

This sequence belongs to the enolase family. Mg(2+) serves as cofactor.

The protein resides in the cytoplasm. It is found in the secreted. It localises to the cell surface. The catalysed reaction is (2R)-2-phosphoglycerate = phosphoenolpyruvate + H2O. The protein operates within carbohydrate degradation; glycolysis; pyruvate from D-glyceraldehyde 3-phosphate: step 4/5. In terms of biological role, catalyzes the reversible conversion of 2-phosphoglycerate (2-PG) into phosphoenolpyruvate (PEP). It is essential for the degradation of carbohydrates via glycolysis. In Symbiobacterium thermophilum (strain DSM 24528 / JCM 14929 / IAM 14863 / T), this protein is Enolase.